A 261-amino-acid chain; its full sequence is Phosphatidylglycerol--prolipoprotein diacylglyceryl transferase (261 aa).

A run of 4 helical transmembrane segments spans residues I12 to A32, I41 to A61, G87 to F107, and L112 to I132. An a 1,2-diacyl-sn-glycero-3-phospho-(1'-sn-glycerol)-binding site is contributed by R134. 3 consecutive transmembrane segments (helical) span residues Q170–L190, G200–M220, and G229–I249.

This sequence belongs to the Lgt family.

Its subcellular location is the cell membrane. The enzyme catalyses L-cysteinyl-[prolipoprotein] + a 1,2-diacyl-sn-glycero-3-phospho-(1'-sn-glycerol) = an S-1,2-diacyl-sn-glyceryl-L-cysteinyl-[prolipoprotein] + sn-glycerol 1-phosphate + H(+). The protein operates within protein modification; lipoprotein biosynthesis (diacylglyceryl transfer). Catalyzes the transfer of the diacylglyceryl group from phosphatidylglycerol to the sulfhydryl group of the N-terminal cysteine of a prolipoprotein, the first step in the formation of mature lipoproteins. This Streptococcus sanguinis (strain SK36) protein is Phosphatidylglycerol--prolipoprotein diacylglyceryl transferase.